The sequence spans 372 residues: uncharacterized protein (372 aa).

Residues D202 and 227–229 (GDF) each bind S-adenosyl-L-methionine.

It belongs to the class I-like SAM-binding methyltransferase superfamily. Cation-independent O-methyltransferase family.

This is an uncharacterized protein from Methanocaldococcus jannaschii (strain ATCC 43067 / DSM 2661 / JAL-1 / JCM 10045 / NBRC 100440) (Methanococcus jannaschii).